The following is a 681-amino-acid chain: Type VI secretion system spike protein VgrG1 (681 aa).

The disordered stretch occupies residues 621 to 640; sequence NSGGSPSSGSGWGGKSPVDP.

It belongs to the VgrG protein family.

The protein localises to the secreted. It catalyses the reaction L-arginyl-[protein] + NAD(+) = N(omega)-(ADP-D-ribosyl)-L-arginyl-[protein] + nicotinamide + H(+). Part of the type VI secretion system specialized secretion system, which delivers several virulence factors in both prokaryotic and eukaryotic cells during infection. Acts directly as an secreted effector with an actin ADP-ribosyltransferase activity that disrupts the host actin cytoskeleton, leading to a decrease in host cell viability and an increase in apoptosis. The protein is Type VI secretion system spike protein VgrG1 (vgrG1) of Aeromonas hydrophila.